The primary structure comprises 286 residues: Citrullinase (286 aa).

Residues 4–258 (IKVAVVQLSF…DDILYATFDF (255 aa)) enclose the CN hydrolase domain. Residue E43 is the Proton acceptor of the active site. The active site involves K116. C153 functions as the Nucleophile in the catalytic mechanism.

The protein belongs to the carbon-nitrogen hydrolase superfamily.

The enzyme catalyses L-citrulline + H2O + 2 H(+) = L-ornithine + NH4(+) + CO2. Functionally, catalyzes the degradation of citrulline into ornithine, carbon dioxide and ammonia. Contributes to intramacrophage survival, in vivo growth and pathogenesis. The protein is Citrullinase of Francisella tularensis subsp. tularensis (strain SCHU S4 / Schu 4).